A 309-amino-acid chain; its full sequence is PI-PLC X domain-containing protein 1 (309 aa).

The region spanning 17 to 193 (HMWDIPLWNL…QVILSYDDES (177 aa)) is the PI-PLC X-box domain.

This Danio rerio (Zebrafish) protein is PI-PLC X domain-containing protein 1 (plcxd1).